Consider the following 413-residue polypeptide: Paxillin homolog 1 (413 aa).

Positions 33–45 are enriched in basic and acidic residues; that stretch reads HISDRRSQSRDDF. Positions 33-157 are disordered; that stretch reads HISDRRSQSR…PLHSDSMIGT (125 aa). The span at 49-69 shows a compositional bias: polar residues; sequence YDLQGNLNTQSVSNGNITTSP. Residues 73-92 are compositionally biased toward basic and acidic residues; that stretch reads RSSEGKDYSKSQERIYENES. The span at 118–143 shows a compositional bias: polar residues; sequence ASSSRKSLGPPSQAQSYSDVRSNGRS. LIM zinc-binding domains are found at residues 174 to 232, 233 to 292, 293 to 350, and 351 to 410; these read GDCA…NQFS, PKCQ…LFAP, KCNG…ESRG, and SICS…TYAL.

Belongs to the paxillin family. As to expression, isoform a: Expressed in all 95 body wall muscle cells as well as in the pharyngeal muscle cells (at protein level). Isoform c: Expressed in the body wall muscle cells and in the pharyngeal muscle cells.

It localises to the cell junction. It is found in the adherens junction. The protein resides in the cell membrane. The protein localises to the cytoplasm. Its subcellular location is the myofibril. It localises to the sarcomere. It is found in the m line. The protein resides in the cell projection. The protein localises to the podosome. Functionally, required for myofilament organization of the pharyngeal sarcomeres and for pharyngeal muscle contractions and hence for pharyngeal pumping. Together with lin-8, might be required for myofilament organization in the body wall muscles. This chain is Paxillin homolog 1 (pxl-1), found in Caenorhabditis elegans.